A 315-amino-acid chain; its full sequence is 4-hydroxy-3-methylbut-2-enyl diphosphate reductase (315 aa).

Cys12 lines the [4Fe-4S] cluster pocket. (2E)-4-hydroxy-3-methylbut-2-enyl diphosphate-binding residues include His41 and His74. Positions 41 and 74 each coordinate dimethylallyl diphosphate. His41 and His74 together coordinate isopentenyl diphosphate. Residue Cys96 participates in [4Fe-4S] cluster binding. (2E)-4-hydroxy-3-methylbut-2-enyl diphosphate is bound at residue His124. His124 contributes to the dimethylallyl diphosphate binding site. His124 is an isopentenyl diphosphate binding site. Glu126 acts as the Proton donor in catalysis. Thr168 provides a ligand contact to (2E)-4-hydroxy-3-methylbut-2-enyl diphosphate. Cys198 lines the [4Fe-4S] cluster pocket. Ser226, Ser227, Asn228, and Ser270 together coordinate (2E)-4-hydroxy-3-methylbut-2-enyl diphosphate. Ser226, Ser227, Asn228, and Ser270 together coordinate dimethylallyl diphosphate. Isopentenyl diphosphate-binding residues include Ser226, Ser227, Asn228, and Ser270.

It belongs to the IspH family. [4Fe-4S] cluster is required as a cofactor.

It carries out the reaction isopentenyl diphosphate + 2 oxidized [2Fe-2S]-[ferredoxin] + H2O = (2E)-4-hydroxy-3-methylbut-2-enyl diphosphate + 2 reduced [2Fe-2S]-[ferredoxin] + 2 H(+). The catalysed reaction is dimethylallyl diphosphate + 2 oxidized [2Fe-2S]-[ferredoxin] + H2O = (2E)-4-hydroxy-3-methylbut-2-enyl diphosphate + 2 reduced [2Fe-2S]-[ferredoxin] + 2 H(+). It functions in the pathway isoprenoid biosynthesis; dimethylallyl diphosphate biosynthesis; dimethylallyl diphosphate from (2E)-4-hydroxy-3-methylbutenyl diphosphate: step 1/1. The protein operates within isoprenoid biosynthesis; isopentenyl diphosphate biosynthesis via DXP pathway; isopentenyl diphosphate from 1-deoxy-D-xylulose 5-phosphate: step 6/6. In terms of biological role, catalyzes the conversion of 1-hydroxy-2-methyl-2-(E)-butenyl 4-diphosphate (HMBPP) into a mixture of isopentenyl diphosphate (IPP) and dimethylallyl diphosphate (DMAPP). Acts in the terminal step of the DOXP/MEP pathway for isoprenoid precursor biosynthesis. The protein is 4-hydroxy-3-methylbut-2-enyl diphosphate reductase of Pseudomonas savastanoi pv. phaseolicola (strain 1448A / Race 6) (Pseudomonas syringae pv. phaseolicola (strain 1448A / Race 6)).